Reading from the N-terminus, the 115-residue chain is Phosphoribosyl-AMP cyclohydrolase (115 aa).

Mg(2+) is bound at residue Asp80. Cys81 lines the Zn(2+) pocket. The Mg(2+) site is built by Asp82 and Asp84. Positions 97 and 104 each coordinate Zn(2+).

The protein belongs to the PRA-CH family. In terms of assembly, homodimer. It depends on Mg(2+) as a cofactor. The cofactor is Zn(2+).

It is found in the cytoplasm. The catalysed reaction is 1-(5-phospho-beta-D-ribosyl)-5'-AMP + H2O = 1-(5-phospho-beta-D-ribosyl)-5-[(5-phospho-beta-D-ribosylamino)methylideneamino]imidazole-4-carboxamide. The protein operates within amino-acid biosynthesis; L-histidine biosynthesis; L-histidine from 5-phospho-alpha-D-ribose 1-diphosphate: step 3/9. Catalyzes the hydrolysis of the adenine ring of phosphoribosyl-AMP. The polypeptide is Phosphoribosyl-AMP cyclohydrolase (Mycolicibacterium gilvum (strain PYR-GCK) (Mycobacterium gilvum (strain PYR-GCK))).